A 213-amino-acid chain; its full sequence is Probable transaldolase (213 aa).

Lysine 83 serves as the catalytic Schiff-base intermediate with substrate.

Belongs to the transaldolase family. Type 3B subfamily.

Its subcellular location is the cytoplasm. It catalyses the reaction D-sedoheptulose 7-phosphate + D-glyceraldehyde 3-phosphate = D-erythrose 4-phosphate + beta-D-fructose 6-phosphate. The protein operates within carbohydrate degradation; pentose phosphate pathway; D-glyceraldehyde 3-phosphate and beta-D-fructose 6-phosphate from D-ribose 5-phosphate and D-xylulose 5-phosphate (non-oxidative stage): step 2/3. In terms of biological role, transaldolase is important for the balance of metabolites in the pentose-phosphate pathway. This chain is Probable transaldolase, found in Geobacillus sp. (strain WCH70).